Here is an 877-residue protein sequence, read N- to C-terminus: Neurotrypsin (877 aa).

The signal sequence occupies residues 1–20 (MTLARFVLALVLGALPEVVS). An N-linked (GlcNAc...) asparagine glycan is attached at N26. Positions 31–90 (HRHRHRHSPPPGLQYPYYLPTQQRPPRTRPPPPLPRFPRPPRALPAQRPHALQAGHTPRP) are disordered. The span at 44-55 (QYPYYLPTQQRP) shows a compositional bias: low complexity. The segment covering 58-73 (TRPPPPLPRFPRPPRA) has biased composition (pro residues). In terms of domain architecture, Kringle spans 95–167 (CPAGEPWVSV…GKVDWGYCDC (73 aa)). Disulfide bonds link C95–C167, C111–C151, C140–C165, C197–C261, C210–C271, C241–C251, C307–C371, C320–C381, C351–C361, C414–C477, C427–C487, C457–C467, C527–C591, C540–C601, C571–C581, C621–C752, C663–C679, C767–C833, C796–C810, and C823–C852. 4 SRCR domains span residues 172-273 (VRLR…TCSF), 282-383 (IRLV…SCTP), 389-489 (IRLA…ACYP), and 502-603 (VRLM…ICDY). Positions 621–632 (CGLRLLHRRQKR) are zymogen activation region. A Peptidase S1 domain is found at 633–876 (IIGGKNSLRG…FVPWIKSVTK (244 aa)). H678 (charge relay system) is an active-site residue. N685 carries N-linked (GlcNAc...) asparagine glycosylation. D728 functions as the Charge relay system in the catalytic mechanism. The Charge relay system role is filled by S827.

The protein belongs to the peptidase S1 family.

It is found in the secreted. In terms of biological role, plays a role in neuronal plasticity and the proteolytic action may subserve structural reorganizations associated with learning and memory operations. The chain is Neurotrypsin (PRSS12) from Pongo pygmaeus (Bornean orangutan).